A 793-amino-acid chain; its full sequence is Ankyrin repeat domain-containing protein SOWAHB (793 aa).

4 disordered regions span residues 83-185 (EEGL…QARA), 219-290 (ATAE…ELLT), 337-360 (QLPL…SSHS), and 396-543 (DFVD…SPRV). 3 stretches are compositionally biased toward low complexity: residues 96 to 108 (APSA…CSPR), 134 to 144 (AGAAARAADAA), and 175 to 185 (AAAAAGAQARA). Ser-106 bears the Phosphoserine mark. Residues 220–244 (TAEEKPARALPAQDDRGASREREEG) are compositionally biased toward basic and acidic residues. The span at 246-273 (LAEPAPVPAVAHSPPATVEAATSRASPP) shows a compositional bias: low complexity. Phosphoserine is present on Ser-271. Residues 396-406 (DFVDQESDGSE) are compositionally biased toward acidic residues. Low complexity-rich tracts occupy residues 407–417 (ESSSGPKDSPG) and 498–508 (RSSLAGRAKLS). Over residues 521-533 (KRSRRPPRSRKPS) the composition is skewed to basic residues. ANK repeat units follow at residues 630-659 (TGYT…KAGI) and 669-699 (CGYT…RVNV). Residue Ser-761 is modified to Phosphoserine.

This sequence belongs to the SOWAH family.

In Homo sapiens (Human), this protein is Ankyrin repeat domain-containing protein SOWAHB (SOWAHB).